Consider the following 192-residue polypeptide: Rhomboid protease GlpG (192 aa).

Residues 1 to 10 (MKNFLAQQGK) lie on the Cytoplasmic side of the membrane. The helical transmembrane segment at 11–31 (ITLILTALCVLIYLAQQLGFE) threads the bilayer. Topologically, residues 32–57 (DDIMYLMHYPAYEEQDSEVWRYISHT) are periplasmic. Residues 58–78 (LVHLSNLHILFNLSWFFIFGG) traverse the membrane as a helical segment. The Cytoplasmic portion of the chain corresponds to 79–82 (MIER). Residues 83–103 (TFGSVKLLMLYVVASAITGYV) form a helical membrane-spanning segment. Over 104-107 (QNYV) the chain is Periplasmic. A helical membrane pass occupies residues 108–128 (SGPAFFGLSGVVYAVLGYVFI). Ser-116 acts as the Nucleophile in catalysis. Residues 129–141 (RDKLNHHLFDLPE) are Cytoplasmic-facing. A helical transmembrane segment spans residues 142 to 162 (GFFTMLLVGIALGFISPLFGV). Residue Glu-163 is a topological domain, periplasmic. Residues 164-184 (MGNAAHISGLIVGLIWGFIDS) traverse the membrane as a helical segment. Residue His-169 is part of the active site. Residues 185 to 192 (KLRKNSLE) are Cytoplasmic-facing.

Belongs to the peptidase S54 family.

It is found in the cell inner membrane. It catalyses the reaction Cleaves type-1 transmembrane domains using a catalytic dyad composed of serine and histidine that are contributed by different transmembrane domains.. Functionally, rhomboid-type serine protease that catalyzes intramembrane proteolysis. In Haemophilus influenzae (strain ATCC 51907 / DSM 11121 / KW20 / Rd), this protein is Rhomboid protease GlpG (glpG).